The chain runs to 135 residues: Putative pre-16S rRNA nuclease (135 aa).

This sequence belongs to the YqgF nuclease family.

Its subcellular location is the cytoplasm. Its function is as follows. Could be a nuclease involved in processing of the 5'-end of pre-16S rRNA. This Thermus thermophilus (strain ATCC 27634 / DSM 579 / HB8) protein is Putative pre-16S rRNA nuclease.